The chain runs to 423 residues: MSVTSEVQGLRALNEVDPEIAELIRLEERREADTLRLIASENYVSRAVLEATGSVLTNKYSEGYPHKRYYEGQQQVDVVEELARTRVAKLFGADHVNVQPYSGSPANLAVYLAFAQANDTIMGLGLPAGGHLTHGWSVSITGKYFKSVPYGVRESDHRIDLDQVRDLARAHRPKLIWCGTTAYPRTLDFAAFRAIADEVGAILAADIAHIAGLVAAGVHPSPVGIADVVTSTTHKTFRGPRGAMILCKKEHAGAIDKAVFPGLQGGPHNHTTAAIAVAAKEASEEGFRAYARQIVVNAQALGRALESRGFRLITGGTDNHLLLIDMTPKGIAGKPYAQALDRAGIVANYNSIPFDPRKPFDPSGLRIGTPAVTSRGMGVAEMERLAAWMDEVAQNVNDEARIARIAAEVAELCRGFPAPGIRL.

Residues Leu126 and 130–132 (GHL) contribute to the (6S)-5,6,7,8-tetrahydrofolate site. Position 235 is an N6-(pyridoxal phosphate)lysine (Lys235).

The protein belongs to the SHMT family. As to quaternary structure, homodimer. The cofactor is pyridoxal 5'-phosphate.

The protein resides in the cytoplasm. The catalysed reaction is (6R)-5,10-methylene-5,6,7,8-tetrahydrofolate + glycine + H2O = (6S)-5,6,7,8-tetrahydrofolate + L-serine. It functions in the pathway one-carbon metabolism; tetrahydrofolate interconversion. Its pathway is amino-acid biosynthesis; glycine biosynthesis; glycine from L-serine: step 1/1. Its function is as follows. Catalyzes the reversible interconversion of serine and glycine with tetrahydrofolate (THF) serving as the one-carbon carrier. This reaction serves as the major source of one-carbon groups required for the biosynthesis of purines, thymidylate, methionine, and other important biomolecules. Also exhibits THF-independent aldolase activity toward beta-hydroxyamino acids, producing glycine and aldehydes, via a retro-aldol mechanism. The polypeptide is Serine hydroxymethyltransferase (Sorangium cellulosum (strain So ce56) (Polyangium cellulosum (strain So ce56))).